Here is a 345-residue protein sequence, read N- to C-terminus: Ferrochelatase (345 aa).

His215 and Glu296 together coordinate Fe cation.

It belongs to the ferrochelatase family.

The protein resides in the cytoplasm. The catalysed reaction is heme b + 2 H(+) = protoporphyrin IX + Fe(2+). It functions in the pathway porphyrin-containing compound metabolism; protoheme biosynthesis; protoheme from protoporphyrin-IX: step 1/1. Its function is as follows. Catalyzes the ferrous insertion into protoporphyrin IX. Essential for normal nodule development. This is Ferrochelatase from Bradyrhizobium diazoefficiens (strain JCM 10833 / BCRC 13528 / IAM 13628 / NBRC 14792 / USDA 110).